The primary structure comprises 813 residues: Ribonuclease R (813 aa).

The RNB domain maps to 260 to 587; the sequence is RVDLRDLPLV…LHRAIKYLLA (328 aa). Position 544 is an N6-acetyllysine; by PatZ (K544). The 82-residue stretch at 644 to 725 folds into the S1 motif domain; that stretch reads GNVFKGVISS…DERKIDFSLI (82 aa). The segment at 731 to 813 is disordered; that stretch reads PRNVGKTARE…KRAAKKKVAE (83 aa). Composition is skewed to basic and acidic residues over residues 737–749 and 761–774; these read TAREKAKKGDAGK and VNFEPDSAFRGEKK. A compositionally biased stretch (basic residues) spans 775 to 791; sequence TKPKAAKKDARKAKKPS. The span at 792–801 shows a compositional bias: low complexity; that stretch reads AKTQKIAAAT. A compositionally biased stretch (basic residues) spans 802-813; sequence KAKRAAKKKVAE.

It belongs to the RNR ribonuclease family. RNase R subfamily. In terms of assembly, monomer. Mg(2+) is required as a cofactor. Post-translationally, acetylated at Lys-544 by PatZ during exponential growth phase. Acetylation alters RNase R structure and enhances binding of SsrA/tmRNA and SmpB, leading to instability and degradation of RNase R. Not acetylated and stable in stationary phase cells.

The protein resides in the cytoplasm. It catalyses the reaction Exonucleolytic cleavage in the 3'- to 5'-direction to yield nucleoside 5'-phosphates.. With respect to regulation, stimulated by the presence of a monovalent cation. Highly unstable in exponential growth phase. This instability is due to the binding of SsrA/tmRNA and its associated protein SmpB to the C-terminal region of RNase R. In contrast, RNase R becomes stabilized upon entry into stationary phase. The difference in stability between exponential and stationary phase is due to the acetylation of a single lysine residue. Functionally, 3'-5' exoribonuclease that releases 5'-nucleoside monophosphates and is involved in maturation of structured RNAs (rRNAs, tRNAs and SsrA/tmRNA). In stationary phase, involved in the post-transcriptional regulation of ompA mRNA stability. Shortens RNA processively to di- and trinucleotides. In vitro, exhibits helicase activity, which is independent of its RNase activity. RNases 2 and R (rnb and this entry) contribute to rRNA degradation during starvation, while RNase R and PNPase (this entry and pnp) are the major contributors to quality control of rRNA during steady state growth. Required for the expression of virulence genes in enteroinvasive strains of E.coli. In Escherichia coli (strain K12), this protein is Ribonuclease R (rnr).